The following is a 192-amino-acid chain: Ras-like GTP-binding protein Rho1 (192 aa).

Residue 12–19 (GDGACGKT) participates in GTP binding. The Effector region motif lies at 34-42 (YVPTVFENY). GTP-binding positions include 59-63 (DTAGQ) and 117-120 (NKKD). Position 189 is a cysteine methyl ester (Cys189). Cys189 carries S-geranylgeranyl cysteine lipidation. Positions 190 to 192 (LLL) are cleaved as a propeptide — removed in mature form.

The protein belongs to the small GTPase superfamily. Rho family. In terms of assembly, interacts with capu. Interacts (via REM repeats) with Pkn (via N-terminus). Interacts (via N-terminus) with wash (via N-terminus). May interact with dia/diaphanous (via CBD/FH3 domain). As to expression, expressed in hemocytes (at protein level).

Its subcellular location is the cell membrane. It localises to the cytoplasm. The protein localises to the cytoskeleton. It is found in the apical cell membrane. The protein resides in the lateral cell membrane. Has a role in regulating actin cytoskeletal organization: required during early development for proper execution of morphogenetic movements of individual cells and groups of cells important for the formation of the embryonic body plan. Plays a role in regulating dorsal closure during embryogenesis. During axis elongation, required for Rho-kinase Rok planar polarity and adherens junction localization as well as for generating a planar polarized distribution of the actin-binding protein Shrm. During embryogenesis, acts upstream of wash to regulate the developmental migration of tail hemocytes anteriorly along the ventral midline. May have a role in eye development. Involved in targeted recruitment of dia/diaphanous to apical membranes of polarized epithelial cells. The chain is Ras-like GTP-binding protein Rho1 from Drosophila melanogaster (Fruit fly).